Reading from the N-terminus, the 132-residue chain is UPF0299 membrane protein KPN78578_25390 (132 aa).

The next 4 membrane-spanning stretches (helical) occupy residues 5 to 25, 38 to 60, 66 to 86, and 93 to 113; these read LTII…LYAG, GSII…PQWV, ILIR…MQYW, and LGPV…VVSW.

The protein belongs to the UPF0299 family.

The protein localises to the cell inner membrane. The sequence is that of UPF0299 membrane protein KPN78578_25390 from Klebsiella pneumoniae subsp. pneumoniae (strain ATCC 700721 / MGH 78578).